The following is a 476-amino-acid chain: Probable cytosolic Fe-S cluster assembly factor GF22738 (476 aa).

Positions 23, 68, 71, 74, 187, 243, 395, and 399 each coordinate [4Fe-4S] cluster.

The protein belongs to the NARF family.

Its function is as follows. Component of the cytosolic iron-sulfur (Fe/S) protein assembly machinery. Required for maturation of extramitochondrial Fe/S proteins. The sequence is that of Probable cytosolic Fe-S cluster assembly factor GF22738 from Drosophila ananassae (Fruit fly).